Reading from the N-terminus, the 384-residue chain is Multidrug/solvent efflux pump periplasmic linker protein MepA (384 aa).

Residues 1–22 form the signal peptide; the sequence is MQFKPAVTALVSAVALATLLSG. A lipid anchor (N-palmitoyl cysteine) is attached at Cys23. Cys23 carries the S-diacylglycerol cysteine lipid modification. The stretch at 115–155 forms a coiled coil; that stretch reads LAERYKQLIDEQAVSKQEYDDANAKRLQAEASLKSAQIDLR. The disordered stretch occupies residues 362 to 384; the sequence is ATNVKKPAGPDQANAAKADAKAE. Low complexity predominate over residues 368–378; that stretch reads PAGPDQANAAK.

The protein belongs to the membrane fusion protein (MFP) (TC 8.A.1) family.

It is found in the cell inner membrane. The periplasmic linker protein component of an organic solvent and antibiotic efflux pump; confers resistance to toluene, hexane, p-xylene, ampicillin, penicillin G, erythromycin, novobiocin and tetracycline. This is Multidrug/solvent efflux pump periplasmic linker protein MepA (mepA) from Pseudomonas putida (Arthrobacter siderocapsulatus).